The primary structure comprises 446 residues: Phosphoglucosamine mutase (446 aa).

The active-site Phosphoserine intermediate is Ser-103. Residues Ser-103, Asp-242, Asp-244, and Asp-246 each contribute to the Mg(2+) site. Ser-103 bears the Phosphoserine mark.

The protein belongs to the phosphohexose mutase family. It depends on Mg(2+) as a cofactor. Post-translationally, activated by phosphorylation.

It catalyses the reaction alpha-D-glucosamine 1-phosphate = D-glucosamine 6-phosphate. Its function is as follows. Catalyzes the conversion of glucosamine-6-phosphate to glucosamine-1-phosphate. The protein is Phosphoglucosamine mutase of Vibrio cholerae serotype O1 (strain ATCC 39541 / Classical Ogawa 395 / O395).